A 508-amino-acid polypeptide reads, in one-letter code: Histidine ammonia-lyase (508 aa).

Positions 143-145 (ASG) form a cross-link, 5-imidazolinone (Ala-Gly). A 2,3-didehydroalanine (Ser) modification is found at S144.

The protein belongs to the PAL/histidase family. Contains an active site 4-methylidene-imidazol-5-one (MIO), which is formed autocatalytically by cyclization and dehydration of residues Ala-Ser-Gly.

The protein localises to the cytoplasm. The catalysed reaction is L-histidine = trans-urocanate + NH4(+). Its pathway is amino-acid degradation; L-histidine degradation into L-glutamate; N-formimidoyl-L-glutamate from L-histidine: step 1/3. The polypeptide is Histidine ammonia-lyase (Caldanaerobacter subterraneus subsp. tengcongensis (strain DSM 15242 / JCM 11007 / NBRC 100824 / MB4) (Thermoanaerobacter tengcongensis)).